A 174-amino-acid chain; its full sequence is Peptide methionine sulfoxide reductase MsrA (174 aa).

Residue C10 is part of the active site.

This sequence belongs to the MsrA Met sulfoxide reductase family.

It catalyses the reaction L-methionyl-[protein] + [thioredoxin]-disulfide + H2O = L-methionyl-(S)-S-oxide-[protein] + [thioredoxin]-dithiol. The catalysed reaction is [thioredoxin]-disulfide + L-methionine + H2O = L-methionine (S)-S-oxide + [thioredoxin]-dithiol. Its function is as follows. Has an important function as a repair enzyme for proteins that have been inactivated by oxidation. Catalyzes the reversible oxidation-reduction of methionine sulfoxide in proteins to methionine. This Arthrobacter sp. (strain FB24) protein is Peptide methionine sulfoxide reductase MsrA.